Here is a 183-residue protein sequence, read N- to C-terminus: ARS-binding factor 2, mitochondrial (183 aa).

A mitochondrion-targeting transit peptide spans 1-26; sequence MNSYSLLTRSFHESSKPLFNLASTLL. 2 consecutive DNA-binding regions (HMG box) follow at residues 43–111 and 116–183; these read PKRP…KEFD and PKKP…YPLN.

It is found in the mitochondrion. The protein localises to the nucleus. Functionally, specific binding to the autonomously replicating sequence 1 (ARS1). Interaction with regulatory regions: probably involved in compacting the mitochondrial genome. It might play a positive role in gene expression and replication. The polypeptide is ARS-binding factor 2, mitochondrial (ABF2) (Saccharomyces cerevisiae (strain ATCC 204508 / S288c) (Baker's yeast)).